We begin with the raw amino-acid sequence, 126 residues long: Histone H2B-alpha (126 aa).

The segment at 1–34 (MSAAEKKPASKAPAGKAPRDTMKSADKKRGKNRK) is disordered. N6-acetyllysine; alternate is present on residues K6 and K7. Residues K6 and K7 each participate in a glycyl lysine isopeptide (Lys-Gly) (interchain with G-Cter in SUMO); alternate cross-link. S10 carries the phosphoserine modification. K11 is subject to N6-acetyllysine. Over residues 17 to 27 (APRDTMKSADK) the composition is skewed to basic and acidic residues. K120 participates in a covalent cross-link: Glycyl lysine isopeptide (Lys-Gly) (interchain with G-Cter in ubiquitin).

This sequence belongs to the histone H2B family. The nucleosome is a histone octamer containing two molecules each of H2A, H2B, H3 and H4 assembled in one H3-H4 heterotetramer and two H2A-H2B heterodimers. The octamer wraps approximately 147 bp of DNA. Interacts with rik1. Post-translationally, monoubiquitinated by the rhp6/ubc2-bre1 complex to form H2BK123ub1. H2BK123ub1 gives a specific tag for epigenetic transcriptional activation and is also prerequisite for H3K4me and H3K79me formation. H2BK123ub1 also modulates the formation of double-strand breaks during meiosis and is a prerequisite for DNA-damage checkpoint activation. In terms of processing, phosphorylated by shk1 to form H2BS10ph during progression through meiotic prophase. May be correlated with chromosome condensation. Acetylation of N-terminal lysines and particularly formation of H2BK11ac has a positive effect on transcription. Post-translationally, sumoylation to form H2BK6su or H2BK7su occurs preferentially near the telomeres and represses gene transcription.

Its subcellular location is the nucleus. The protein resides in the chromosome. Core component of nucleosome. Nucleosomes wrap and compact DNA into chromatin, limiting DNA accessibility to the cellular machineries which require DNA as a template. Histones thereby play a central role in transcription regulation, DNA repair, DNA replication and chromosomal stability. DNA accessibility is regulated via a complex set of post-translational modifications of histones, also called histone code, and nucleosome remodeling. The chain is Histone H2B-alpha (htb1) from Schizosaccharomyces pombe (strain 972 / ATCC 24843) (Fission yeast).